A 1431-amino-acid chain; its full sequence is Collagen alpha-1(XVII) chain (1431 aa).

Residues 1-468 (MDVTKKNKRD…AWCPCGSCCS (468 aa)) are Cytoplasmic-facing. The tract at residues 1-569 (MDVTKKNKRD…MTEQENGNLR (569 aa)) is nonhelical region (NC16). 4 disordered regions span residues 25–155 (TRLT…PSTR), 167–188 (KGSRSASASPTRNTSSTLPIPK), 304–324 (TAYGVKKNVPQPPTVTSTGVS), and 422–449 (SVENHNYDRGGGSGGGARGGGGSGGGGG). Low complexity predominate over residues 60 to 74 (GSSGYINSSGSIRGN). Polar residues-rich tracts occupy residues 75–96 (ASTSSYRRAHSPASTLPNSPGS), 111–120 (EGSSSGNSSP), and 170–184 (RSASASPTRNTSSTL). The segment at 146-231 (RLQSASPSTR…WSSTLPAGSS (86 aa)) is necessary for interaction with DST and for the recruitment of DST to hemidesmosome. Residues 430-449 (RGGGSGGGARGGGGSGGGGG) are compositionally biased toward gly residues. Residues 469–489 (WWKWLLGLLLTWLLLLGLLFG) traverse the membrane as a helical; Signal-anchor for type II membrane protein segment. At 490 to 1431 (LIALAEEVRK…RRRRSIAIKP (942 aa)) the chain is on the extracellular side. Serine 547 carries the post-translational modification Phosphoserine; by CK2. 4 disordered regions span residues 564-869 (ENGN…SFIS), 884-996 (DLRG…SSSG), 1158-1178 (DIIGPPGPPGPPGPRGPPGVS), and 1208-1249 (FIIG…SSSV). The interval 570 to 1417 (GNPGPKGDMG…KGDKGDKGDQ (848 aa)) is triple-helical region. Composition is skewed to low complexity over residues 657 to 673 (PRGLPGVPGSVGPRGPN), 738 to 751 (EPGAKGAMGPAGPD), and 778 to 799 (PGKPGVTGPQGPQGLPGSPGRP). Composition is skewed to pro residues over residues 823–844 (PGPPGPPGAMGPPGPSGTPGPA), 889–911 (LGPPGPRGPPGPSIPGPPGPRGP), 937–946 (PPGPPGPPGP), 979–989 (PPGPPGPPGPP), 1162–1174 (PPGPPGPPGPRGP), and 1212–1221 (PPGPPGPQGP). Asparagine 1230 carries an N-linked (GlcNAc...) asparagine glycan. A compositionally biased stretch (polar residues) spans 1232-1249 (SWGSSSSARRGTAYSSSV). An N-linked (GlcNAc...) asparagine glycan is attached at asparagine 1356. Residues 1366–1431 (RTHGAIPGPP…RRRRSIAIKP (66 aa)) form a disordered region. Over residues 1407 to 1416 (QKGDKGDKGD) the composition is skewed to basic and acidic residues. The nonhelical region (NC1) stretch occupies residues 1418–1431 (VYTGRRRRSIAIKP). A compositionally biased stretch (basic residues) spans 1421–1431 (GRRRRSIAIKP).

In terms of assembly, homotrimers of alpha 1(XVII)chains. Interacts (via cytoplasmic region) with ITGB4 (via cytoplasmic region). Interacts (via cytoplasmic region) with DST (via N-terminus). Interacts (via N-terminus) with PLEC. Interacts (via cytoplasmic region) with DSP. In terms of processing, the intracellular/endo domain is disulfide-linked. Prolines at the third position of the tripeptide repeating unit (G-X-Y) are hydroxylated in some or all of the chains. Post-translationally, the ectodomain is shedded from the surface of keratinocytes resulting in a 120-kDa soluble form, also named as 120 kDa linear IgA disease antigen homolog. The shedding is mediated by membrane-bound metalloproteases. This cleavage is inhibited by phosphorylation at Ser-547.

Its subcellular location is the cell junction. The protein resides in the hemidesmosome. It localises to the membrane. The protein localises to the secreted. It is found in the extracellular space. Its subcellular location is the extracellular matrix. The protein resides in the basement membrane. In terms of biological role, may play a role in the integrity of hemidesmosome and the attachment of basal keratinocytes to the underlying basement membrane. Its function is as follows. The 120 kDa linear IgA disease antigen homolog is an anchoring filament component involved in dermal-epidermal cohesion. This is Collagen alpha-1(XVII) chain (COL17A1) from Mesocricetus auratus (Golden hamster).